Consider the following 754-residue polypeptide: Polyadenylate-binding protein, cytoplasmic and nuclear (754 aa).

Positions 1–25 (MSAEVSTTPAADNVNGTPEATNAAA) are enriched in polar residues. Positions 1-52 (MSAEVSTTPAADNVNGTPEATNAAATSAPEVTAVESSSPTSPNNNNQPHSAS) are disordered. A compositionally biased stretch (low complexity) spans 36–46 (SSSPTSPNNNN). 4 consecutive RRM domains span residues 51-129 (ASLY…WSQR), 139-216 (GNVF…HHIS), 232-309 (TNIY…RAQK), and 335-465 (VNLY…LAQR). 2 disordered regions span residues 365–420 (KVMR…KKSD) and 595–648 (RGGG…EEAP). A compositionally biased stretch (basic and acidic residues) spans 366 to 420 (VMRDSTPAERTETPDSEKEKEVNKENEKKEDEEKAAEEKPKESDEEKKDETKKSD). The span at 610–633 (GMRGPGYQGRGGPQGGPRPQGGRG) shows a compositional bias: gly residues. Over residues 634 to 648 (QNAAAQPAAGREEAP) the composition is skewed to low complexity. A PABC domain is found at 649–726 (AGALTAQALN…ALSVYDEYMK (78 aa)). The interval 729–754 (GEGEAPADADKPKEAAKETATEENKS) is disordered.

This sequence belongs to the polyadenylate-binding protein type-1 family.

The protein resides in the cytoplasm. Its subcellular location is the nucleus. Functionally, binds the poly(A) tail of mRNA. Appears to be an important mediator of the multiple roles of the poly(A) tail in mRNA biogenesis, stability and translation. In the nucleus, involved in both mRNA cleavage and polyadenylation. Is also required for efficient mRNA export to the cytoplasm. Acts in concert with a poly(A)-specific nuclease (PAN) to affect poly(A) tail shortening, which may occur concomitantly with either nucleocytoplasmic mRNA transport or translational initiation. In the cytoplasm, stimulates translation initiation and regulates mRNA decay through translation termination-coupled poly(A) shortening, probably mediated by PAN. The protein is Polyadenylate-binding protein, cytoplasmic and nuclear (pab1) of Aspergillus clavatus (strain ATCC 1007 / CBS 513.65 / DSM 816 / NCTC 3887 / NRRL 1 / QM 1276 / 107).